The following is a 342-amino-acid chain: (Lyso)-N-acylphosphatidylethanolamine lipase (342 aa).

The 255-residue stretch at 70-324 folds into the AB hydrolase-1 domain; sequence PLVMVHGFGG…IEGASHHVYA (255 aa).

It belongs to the peptidase S33 family. ABHD4/ABHD5 subfamily.

The enzyme catalyses N-hexadecanoyl-1,2-di-(9Z-octadecenoyl)-sn-glycero-3-phosphoethanolamine + H2O = N-hexadecanoyl-1-(9Z-octadecenoyl)-sn-glycero-3-phosphoethanolamine + (9Z)-octadecenoate + H(+). It catalyses the reaction an N-acyl-1,2-diacyl-sn-glycero-3-phosphoethanolamine + H2O = N,1-diacyl-sn-glycero-3-phosphoethanolamine + a fatty acid + H(+). It carries out the reaction N-hexadecanoyl-1-(9Z-octadecenoyl)-sn-glycero-3-phosphoethanolamine + H2O = N-hexadecanoyl-sn-glycero-3-phosphoethanolamine + (9Z)-octadecenoate + H(+). The catalysed reaction is N-octadecanoyl-1-(9Z-octadecenoyl)-sn-glycero-3-phosphoethanolamine + H2O = N-octadecanoyl-sn-glycero-3-phospho-ethanolamine + (9Z)-octadecenoate + H(+). The enzyme catalyses N-eicosanoyl-1-(9Z-octadecenoyl)-sn-glycero-3-phosphoethanolamine + H2O = N-eicosanoyl-sn-glycero-3-phosphoethanolamine + (9Z)-octadecenoate + H(+). It catalyses the reaction N,1-di-(9Z-octadecenoyl)-sn-glycero-3-phosphoethanolamine + H2O = N-(9Z-octadecenoyl)-sn-glycero-3-phosphoethanolamine + (9Z)-octadecenoate + H(+). It carries out the reaction N-(5Z,8Z,11Z,14Z-eicosatetraenoyl)-1-(9Z-octadecenoyl)-sn-glycero-3-phosphoethanolamine + H2O = N-(5Z,8Z,11Z,14Z-eicosatetraenoyl)-sn-glycero-3-phosphoethanolamine + (9Z)-octadecenoate + H(+). The catalysed reaction is 1-octadecanoyl-2-(9Z-octadecenoyl)-sn-glycero-3-phospho-(N-hexadecanoyl)-serine + H2O = 1-octadecanoyl-2-hydroxy-sn-glycero-3-phospho-(N-hexadecanoyl)-serine + (9Z)-octadecenoate + H(+). The enzyme catalyses 1-O-(1Z-octadecenoyl)-2-(9Z-octadecenoyl)-sn-glycero-3-phospho-N-hexadecanoyl-ethanolamine + H2O = 1-O-(1Z-octadecenyl)-sn-glycero-3-phospho-N-hexadecanoyl-ethanolamine + (9Z)-octadecenoate + H(+). It catalyses the reaction N,1-diacyl-sn-glycero-3-phosphoethanolamine + H2O = N-acyl-sn-glycero-3-phosphoethanolamine + a fatty acid + H(+). Its function is as follows. Lysophospholipase selective for N-acyl phosphatidylethanolamine (NAPE). Contributes to the biosynthesis of N-acyl ethanolamines, including the endocannabinoid anandamide by hydrolyzing the sn-1 and sn-2 acyl chains from N-acyl phosphatidylethanolamine (NAPE) generating glycerophospho-N-acyl ethanolamine (GP-NAE), an intermediate for N-acyl ethanolamine biosynthesis. Hydrolyzes substrates bearing saturated, monounsaturated, polyunsaturated N-acyl chains. Shows no significant activity towards other lysophospholipids, including lysophosphatidylcholine, lysophosphatidylethanolamine and lysophosphatidylserine. The protein is (Lyso)-N-acylphosphatidylethanolamine lipase of Bos taurus (Bovine).